Consider the following 517-residue polypeptide: Glutamate--cysteine ligase (517 aa).

This sequence belongs to the glutamate--cysteine ligase type 1 family. Type 1 subfamily.

It catalyses the reaction L-cysteine + L-glutamate + ATP = gamma-L-glutamyl-L-cysteine + ADP + phosphate + H(+). The protein operates within sulfur metabolism; glutathione biosynthesis; glutathione from L-cysteine and L-glutamate: step 1/2. The protein is Glutamate--cysteine ligase of Pectobacterium atrosepticum (strain SCRI 1043 / ATCC BAA-672) (Erwinia carotovora subsp. atroseptica).